We begin with the raw amino-acid sequence, 405 residues long: Formate-dependent phosphoribosylglycinamide formyltransferase (405 aa).

N(1)-(5-phospho-beta-D-ribosyl)glycinamide contacts are provided by residues 22-23 and Glu-82; that span reads EL. Residues Arg-115, Lys-162, 167–172, 202–205, and Glu-210 contribute to the ATP site; these read SSGKGQ and EGFI. The ATP-grasp domain maps to 120-320; it reads RLAAETLGLP…EFELHARAIL (201 aa). The Mg(2+) site is built by Glu-279 and Glu-291. Residues Asp-298, Lys-367, and 374 to 375 contribute to the N(1)-(5-phospho-beta-D-ribosyl)glycinamide site; that span reads RR.

It belongs to the PurK/PurT family. In terms of assembly, homodimer.

The enzyme catalyses N(1)-(5-phospho-beta-D-ribosyl)glycinamide + formate + ATP = N(2)-formyl-N(1)-(5-phospho-beta-D-ribosyl)glycinamide + ADP + phosphate + H(+). It functions in the pathway purine metabolism; IMP biosynthesis via de novo pathway; N(2)-formyl-N(1)-(5-phospho-D-ribosyl)glycinamide from N(1)-(5-phospho-D-ribosyl)glycinamide (formate route): step 1/1. Its function is as follows. Involved in the de novo purine biosynthesis. Catalyzes the transfer of formate to 5-phospho-ribosyl-glycinamide (GAR), producing 5-phospho-ribosyl-N-formylglycinamide (FGAR). Formate is provided by PurU via hydrolysis of 10-formyl-tetrahydrofolate. The protein is Formate-dependent phosphoribosylglycinamide formyltransferase of Leptothrix cholodnii (strain ATCC 51168 / LMG 8142 / SP-6) (Leptothrix discophora (strain SP-6)).